The sequence spans 977 residues: Fc receptor-like protein 5 (977 aa).

Residues 1 to 15 (MLLWVILLVLAPVSG) form the signal peptide. Residues 16–851 (QFARTPRPII…ANRSGPFATG (836 aa)) are Extracellular-facing. 8 consecutive Ig-like C2-type domains span residues 23–101 (PIIF…LDFS), 188–271 (PFTR…SVIS), 287–374 (PVLT…LSVT), 380–463 (PVLN…KAVS), 473–556 (PVLT…EVVS), 566–651 (PILT…ISLS), 659–744 (PILT…VTLK), and 752–834 (PVLT…ETVT). Disulfide bonds link C44-C85, C211-C260, and C308-C355. N-linked (GlcNAc...) asparagine glycosylation is present at N383. 5 disulfides stabilise this stretch: C401–C448, C494–C541, C587–C634, C680–C727, and C773–C819. Residues 852 to 872 (VAGGLLSIAGLAAGALLLYCW) form a helical membrane-spanning segment. At 873 to 977 (LSRKAGRKPA…LFLASSAPHR (105 aa)) the chain is on the cytoplasmic side. The tract at residues 879-898 (RKPASDPARSPSDSDSQEPT) is disordered. Over residues 883 to 892 (SDPARSPSDS) the composition is skewed to low complexity. Short sequence motifs (ITIM motif) lie at residues 897-902 (PTYHNV), 910-915 (PVYTNA), 922-927 (VVYSEV), and 952-957 (IIYSEV).

As to quaternary structure, interacts with CR2. Interacts with CD19. As to expression, expressed in marginal zone B-cells, immunoblasts, tonsillar germinal center centrocytes and in the intraepithelial and interfollicular regions of the tonsil. Expressed in many lymphoma cell lines and on hairy cell leukemia cells. Isoform 1, isoform 3, isoform 4 and isoform 5 are detected in lymph node, spleen, bone marrow, and small intestine with preponderance of isoform 3. Expressed in mature and memory B-cells and down-regulated in germinal center cells (at protein level).

The protein localises to the cell membrane. In terms of biological role, plays an important role in B-cell response to antigen that acts both as a negative or positive coreceptor. Inhibits B-cell receptor (BCR) signaling in the absence of CR2 stimulation but engagement with CR2 and the BCR lead to a superior calcium response compared to CR2 and BCR costimulation. May be involved in B-cell development and differentiation in peripheral lymphoid organs and may be useful markers of B-cell stages. May have an immunoregulatory role in marginal zone B-cells. May play a role in fertilization. This chain is Fc receptor-like protein 5 (FCRL5), found in Homo sapiens (Human).